The chain runs to 497 residues: 3-octaprenyl-4-hydroxybenzoate carboxy-lyase (497 aa).

Asn-175 is a binding site for Mn(2+). Prenylated FMN contacts are provided by residues 178 to 180 (IYR), 192 to 194 (RWL), and 197 to 198 (RG). Glu-241 provides a ligand contact to Mn(2+). Catalysis depends on Asp-290, which acts as the Proton donor.

This sequence belongs to the UbiD family. As to quaternary structure, homohexamer. Prenylated FMN is required as a cofactor. The cofactor is Mn(2+).

It is found in the cell membrane. It carries out the reaction a 4-hydroxy-3-(all-trans-polyprenyl)benzoate + H(+) = a 2-(all-trans-polyprenyl)phenol + CO2. It functions in the pathway cofactor biosynthesis; ubiquinone biosynthesis. Functionally, catalyzes the decarboxylation of 3-octaprenyl-4-hydroxy benzoate to 2-octaprenylphenol, an intermediate step in ubiquinone biosynthesis. In Shigella boydii serotype 4 (strain Sb227), this protein is 3-octaprenyl-4-hydroxybenzoate carboxy-lyase.